A 489-amino-acid polypeptide reads, in one-letter code: Aerolysin (489 aa).

An N-terminal signal peptide occupies residues 1 to 24 (MMNRIITANLANLASSLMLAQVLG). 2 cysteine pairs are disulfide-bonded: cysteine 44/cysteine 100 and cysteine 184/cysteine 189. Residues 70–86 (WQITGLADRWVIMGPGY) form an interaction with host N-linked glycan region. The segment at 257–289 (YSLSEKVTTKNKFQWPLVGETELAIEIAASQSW) is part of the transmembrane beta-barrel after proteolytic activation of the toxin and insertion into the host membrane. Residues 347-356 (RWGGNAWYTH) form an interaction with glycans from host GPI-anchor region. Residues 445–489 (TRSAKAAQLRSASAEEVALTSVDLDSEALANEGFGNVSLTIVPVQ) constitute a propeptide that is removed on maturation.

The protein belongs to the aerolysin family. In terms of assembly, homodimer in solution; homoheptamer in the host membrane. After binding to GPI-anchored proteins in target membranes and proteolytic removal of the C-terminal propeptide, the protein assembles into a heptameric pre-pore complex. A further conformation change leads to insertion into the host membrane. Post-translationally, proteolytic cleavage and subsequent release of the propeptide trigger a major conformation change, leading to the formation of a heptameric pre-pore that then inserts into the host membrane.

The protein localises to the secreted. It localises to the host cell membrane. Its function is as follows. Secreted, cytolytic toxin that forms pores in host membranes after proteolytic removal of a C-terminal propeptide, leading to destruction of the membrane permeability barrier and cell death. The pores are formed by transmembrane beta-strands and are approximately 3 nm in diameter. This chain is Aerolysin (ash3), found in Aeromonas salmonicida.